The following is an 86-amino-acid chain: Cell division topological specificity factor (86 aa).

This sequence belongs to the MinE family.

Its function is as follows. Prevents the cell division inhibition by proteins MinC and MinD at internal division sites while permitting inhibition at polar sites. This ensures cell division at the proper site by restricting the formation of a division septum at the midpoint of the long axis of the cell. This Parasynechococcus marenigrum (strain WH8102) protein is Cell division topological specificity factor.